A 64-amino-acid polypeptide reads, in one-letter code: DNA gyrase inhibitor YacG (64 aa).

Zn(2+) contacts are provided by Cys-9, Cys-12, Cys-28, and Cys-32. Residues Asp-42 to Tyr-64 are disordered. Residues Ser-54–Tyr-64 are compositionally biased toward acidic residues.

Belongs to the DNA gyrase inhibitor YacG family. As to quaternary structure, interacts with GyrB. The cofactor is Zn(2+).

Functionally, inhibits all the catalytic activities of DNA gyrase by preventing its interaction with DNA. Acts by binding directly to the C-terminal domain of GyrB, which probably disrupts DNA binding by the gyrase. This chain is DNA gyrase inhibitor YacG, found in Vibrio vulnificus (strain CMCP6).